The chain runs to 286 residues: ATP synthase gamma chain (286 aa).

This sequence belongs to the ATPase gamma chain family. As to quaternary structure, F-type ATPases have 2 components, CF(1) - the catalytic core - and CF(0) - the membrane proton channel. CF(1) has five subunits: alpha(3), beta(3), gamma(1), delta(1), epsilon(1). CF(0) has three main subunits: a, b and c.

The protein resides in the cell inner membrane. In terms of biological role, produces ATP from ADP in the presence of a proton gradient across the membrane. The gamma chain is believed to be important in regulating ATPase activity and the flow of protons through the CF(0) complex. The sequence is that of ATP synthase gamma chain from Flavobacterium psychrophilum (strain ATCC 49511 / DSM 21280 / CIP 103535 / JIP02/86).